We begin with the raw amino-acid sequence, 94 residues long: Co-chaperonin GroES (94 aa).

Belongs to the GroES chaperonin family. As to quaternary structure, heptamer of 7 subunits arranged in a ring. Interacts with the chaperonin GroEL.

Its subcellular location is the cytoplasm. In terms of biological role, together with the chaperonin GroEL, plays an essential role in assisting protein folding. The GroEL-GroES system forms a nano-cage that allows encapsulation of the non-native substrate proteins and provides a physical environment optimized to promote and accelerate protein folding. GroES binds to the apical surface of the GroEL ring, thereby capping the opening of the GroEL channel. The polypeptide is Co-chaperonin GroES (Streptococcus equinus (Streptococcus bovis)).